The primary structure comprises 79 residues: Acyl carrier protein (79 aa).

A Carrier domain is found at 1 to 76; that stretch reads MEVFEEVRDV…DVVTYIENLN (76 aa). S36 is modified (O-(pantetheine 4'-phosphoryl)serine).

It belongs to the acyl carrier protein (ACP) family. Post-translationally, 4'-phosphopantetheine is transferred from CoA to a specific serine of apo-ACP by AcpS. This modification is essential for activity because fatty acids are bound in thioester linkage to the sulfhydryl of the prosthetic group.

It localises to the cytoplasm. It participates in lipid metabolism; fatty acid biosynthesis. Carrier of the growing fatty acid chain in fatty acid biosynthesis. This is Acyl carrier protein from Campylobacter hominis (strain ATCC BAA-381 / DSM 21671 / CCUG 45161 / LMG 19568 / NCTC 13146 / CH001A).